A 342-amino-acid polypeptide reads, in one-letter code: S-adenosylmethionine:tRNA ribosyltransferase-isomerase (342 aa).

This sequence belongs to the QueA family. In terms of assembly, monomer.

The protein localises to the cytoplasm. It carries out the reaction 7-aminomethyl-7-carbaguanosine(34) in tRNA + S-adenosyl-L-methionine = epoxyqueuosine(34) in tRNA + adenine + L-methionine + 2 H(+). Its pathway is tRNA modification; tRNA-queuosine biosynthesis. In terms of biological role, transfers and isomerizes the ribose moiety from AdoMet to the 7-aminomethyl group of 7-deazaguanine (preQ1-tRNA) to give epoxyqueuosine (oQ-tRNA). This chain is S-adenosylmethionine:tRNA ribosyltransferase-isomerase, found in Listeria monocytogenes serotype 4b (strain F2365).